Reading from the N-terminus, the 767-residue chain is Glucoamylase S1 (767 aa).

The N-terminal stretch at 1-21 (MQRPFLLAYLVLSLLFNSALG) is a signal peptide. 2 disordered regions span residues 29 to 83 (RGSS…ETTI) and 125 to 149 (TTTV…PTTP). A compositionally biased stretch (low complexity) spans 30-48 (GSSSSNITSSGPSSTPFSS). N-linked (GlcNAc...) asparagine glycosylation is present at N35. The segment covering 49–66 (ATESFSTGTTVTPSSSKY) has biased composition (polar residues). 2 stretches are compositionally biased toward low complexity: residues 71–83 (TETS…ETTI) and 131–149 (STSP…PTTP). 5 N-linked (GlcNAc...) asparagine glycosylation sites follow: N308, N322, N414, N423, and N434. The segment at 348–691 (VSIERIFENI…ASTTLYQLIY (344 aa)) is h subunit. Residue W455 coordinates substrate. N513 is a glycosylation site (N-linked (GlcNAc...) asparagine). The Proton acceptor role is filled by D518. E521 functions as the Proton donor in the catalytic mechanism. N-linked (GlcNAc...) asparagine glycans are attached at residues N546, N645, N650, N720, and N741. The segment at 692–767 (RHISEQHDLV…LKATWEQTGN (76 aa)) is y subunit.

This sequence belongs to the glycosyl hydrolase 15 family.

The catalysed reaction is Hydrolysis of terminal (1-&gt;4)-linked alpha-D-glucose residues successively from non-reducing ends of the chains with release of beta-D-glucose.. The polypeptide is Glucoamylase S1 (STA1) (Saccharomyces cerevisiae (Baker's yeast)).